The chain runs to 234 residues: Small ribosomal subunit protein uS5 (234 aa).

The span at 1–10 (MEDIKTTTPE) shows a compositional bias: polar residues. The interval 1-69 (MEDIKTTTPE…KDGSGNKPNK (69 aa)) is disordered. The segment covering 11–31 (VKNEENKTSEVKEGKALEKNN) has biased composition (basic and acidic residues). The region spanning 78-141 (LEEKIVGVKK…KSAKNNMYKV (64 aa)) is the S5 DRBM domain.

The protein belongs to the universal ribosomal protein uS5 family. As to quaternary structure, part of the 30S ribosomal subunit. Contacts proteins S4 and S8.

With S4 and S12 plays an important role in translational accuracy. Functionally, located at the back of the 30S subunit body where it stabilizes the conformation of the head with respect to the body. This chain is Small ribosomal subunit protein uS5, found in Malacoplasma penetrans (strain HF-2) (Mycoplasma penetrans).